The primary structure comprises 529 residues: Probable feruloyl esterase B-1 (529 aa).

The N-terminal stretch at 1 to 19 (MKISYFFVASLSYVSVARA) is a signal peptide. Disulfide bonds link Cys-27-Cys-75 and Cys-63-Cys-114. N-linked (GlcNAc...) asparagine glycosylation is found at Asn-53, Asn-64, Asn-85, Asn-98, and Asn-138. Intrachain disulfides connect Cys-187–Cys-445, Cys-256–Cys-273, Cys-282–Cys-295, and Cys-505–Cys-527. The active-site Acyl-ester intermediate is the Ser-188. N-linked (GlcNAc...) asparagine glycosylation occurs at Asn-233. Residues Asp-257, Asp-260, Ala-262, Asp-264, and Leu-266 each contribute to the Ca(2+) site. N-linked (GlcNAc...) asparagine glycans are attached at residues Asn-286, Asn-290, and Asn-354. Residues Asp-404 and His-444 each act as charge relay system in the active site.

The protein belongs to the tannase family.

The protein resides in the secreted. The catalysed reaction is feruloyl-polysaccharide + H2O = ferulate + polysaccharide.. Its function is as follows. Involved in degradation of plant cell walls. Hydrolyzes the feruloyl-arabinose ester bond in arabinoxylans as well as the feruloyl-galactose and feruloyl-arabinose ester bonds in pectin. The polypeptide is Probable feruloyl esterase B-1 (faeB-1) (Aspergillus terreus (strain NIH 2624 / FGSC A1156)).